Reading from the N-terminus, the 405-residue chain is MCSIGEDDFGDDGAAHAMAVESLPLGIVLSPGNCSKCDVNSDELYKLNFRTAECRECFLAYARHKFRAALGAAKILPRNAEVLLVLDGSAESLVLLDMLHFAQTQNTFKRLHCNARVVYVEEQQVQGRDPVHLEALQNLSTQYAPFDFYVIELGALPSSMQRIKDYSPSLNANNELIHKLQKLRSLTARQDYLQQQRKNLICSVAQCLRCTHVFESNISVDLATQLLTAIALGRGGSAALDVALLDDRLSGDVKLLRPLKDLNEQEIQFYIHAQRLKPLFQKGSRYGREHGQTASLQNLTSAFVANLQQNYASTVSTVFRTGDKIAANSNPEQSSCVHCRSTLDTELSDTLLAIEYSRSVSEAGVSLYKSGQDLEDLAKKRLENKDGLCHACRAIQAELDSGNLL.

This sequence belongs to the CTU2/NCS2 family.

Its subcellular location is the cytoplasm. Its pathway is tRNA modification; 5-methoxycarbonylmethyl-2-thiouridine-tRNA biosynthesis. Functionally, plays a central role in 2-thiolation of mcm(5)S(2)U at tRNA wobble positions of tRNA(Lys), tRNA(Glu) and tRNA(Gln). May act by forming a heterodimer with NCS6/CTU1 that ligates sulfur from thiocarboxylated URM1 onto the uridine of tRNAs at wobble position. The sequence is that of Cytoplasmic tRNA 2-thiolation protein 2 from Drosophila simulans (Fruit fly).